The sequence spans 284 residues: NH(3)-dependent NAD(+) synthetase (284 aa).

ATP is bound at residue glycine 51 to serine 58. Aspartate 57 is a binding site for Mg(2+). A deamido-NAD(+)-binding site is contributed by arginine 148. Position 168 (threonine 168) interacts with ATP. Glutamate 173 contacts Mg(2+). The deamido-NAD(+) site is built by lysine 181 and aspartate 188. Lysine 197 and threonine 219 together coordinate ATP. Histidine 268–lysine 269 is a binding site for deamido-NAD(+).

Belongs to the NAD synthetase family. As to quaternary structure, homodimer.

The catalysed reaction is deamido-NAD(+) + NH4(+) + ATP = AMP + diphosphate + NAD(+) + H(+). It functions in the pathway cofactor biosynthesis; NAD(+) biosynthesis; NAD(+) from deamido-NAD(+) (ammonia route): step 1/1. Its function is as follows. Catalyzes the ATP-dependent amidation of deamido-NAD to form NAD. Uses ammonia as a nitrogen source. This chain is NH(3)-dependent NAD(+) synthetase, found in Burkholderia mallei (strain NCTC 10247).